Here is a 177-residue protein sequence, read N- to C-terminus: Large ribosomal subunit protein uL6 (177 aa).

The protein belongs to the universal ribosomal protein uL6 family. In terms of assembly, part of the 50S ribosomal subunit.

Its function is as follows. This protein binds to the 23S rRNA, and is important in its secondary structure. It is located near the subunit interface in the base of the L7/L12 stalk, and near the tRNA binding site of the peptidyltransferase center. In Bradyrhizobium diazoefficiens (strain JCM 10833 / BCRC 13528 / IAM 13628 / NBRC 14792 / USDA 110), this protein is Large ribosomal subunit protein uL6.